Reading from the N-terminus, the 214-residue chain is Histidine biosynthesis bifunctional protein HisIE (214 aa).

Residues 1-114 (MDLSAVRFDE…LEGEKDLGFV (114 aa)) are phosphoribosyl-AMP cyclohydrolase. The tract at residues 115-214 (VGQVYATIKE…RSPYDGSHGN (100 aa)) is phosphoribosyl-ATP pyrophosphohydrolase.

The protein in the N-terminal section; belongs to the PRA-CH family. In the C-terminal section; belongs to the PRA-PH family.

It localises to the cytoplasm. It carries out the reaction 1-(5-phospho-beta-D-ribosyl)-ATP + H2O = 1-(5-phospho-beta-D-ribosyl)-5'-AMP + diphosphate + H(+). The catalysed reaction is 1-(5-phospho-beta-D-ribosyl)-5'-AMP + H2O = 1-(5-phospho-beta-D-ribosyl)-5-[(5-phospho-beta-D-ribosylamino)methylideneamino]imidazole-4-carboxamide. It participates in amino-acid biosynthesis; L-histidine biosynthesis; L-histidine from 5-phospho-alpha-D-ribose 1-diphosphate: step 2/9. Its pathway is amino-acid biosynthesis; L-histidine biosynthesis; L-histidine from 5-phospho-alpha-D-ribose 1-diphosphate: step 3/9. The protein is Histidine biosynthesis bifunctional protein HisIE of Thermus thermophilus (strain ATCC BAA-163 / DSM 7039 / HB27).